The sequence spans 431 residues: Adenylosuccinate synthetase (431 aa).

GTP is bound by residues 12–18 and 40–42; these read GDEGKGK and GHT. The active-site Proton acceptor is the aspartate 13. Residues aspartate 13 and glycine 40 each coordinate Mg(2+). IMP contacts are provided by residues 13-16, 38-41, threonine 131, arginine 145, glutamine 225, threonine 240, and arginine 304; these read DEGK and NAGH. Catalysis depends on histidine 41, which acts as the Proton donor. 300–306 provides a ligand contact to substrate; it reads VNTGRRR. GTP is bound by residues arginine 306, 332 to 334, and 414 to 416; these read KLD and STS.

Belongs to the adenylosuccinate synthetase family. As to quaternary structure, homodimer. Mg(2+) serves as cofactor.

The protein resides in the cytoplasm. The enzyme catalyses IMP + L-aspartate + GTP = N(6)-(1,2-dicarboxyethyl)-AMP + GDP + phosphate + 2 H(+). It functions in the pathway purine metabolism; AMP biosynthesis via de novo pathway; AMP from IMP: step 1/2. Its function is as follows. Plays an important role in the de novo pathway of purine nucleotide biosynthesis. Catalyzes the first committed step in the biosynthesis of AMP from IMP. This Beijerinckia indica subsp. indica (strain ATCC 9039 / DSM 1715 / NCIMB 8712) protein is Adenylosuccinate synthetase.